The primary structure comprises 108 residues: uncharacterized protein (108 aa).

This is an uncharacterized protein from Saccharolobus islandicus (Sulfolobus islandicus).